The chain runs to 719 residues: Pesticidal crystal protein Cry1Ia (719 aa).

Belongs to the delta endotoxin family.

Functionally, promotes colloidosmotic lysis by binding to the midgut epithelial cells of certain coleopteran and lepidopteran species. Active on Plutella xylostella and Bombyx mori. The chain is Pesticidal crystal protein Cry1Ia (cry1Ia) from Bacillus thuringiensis subsp. kurstaki.